Here is a 194-residue protein sequence, read N- to C-terminus: Thymidine kinase (194 aa).

Residues 15-22 (GSMFSGKS) and 88-91 (DEVQ) contribute to the ATP site. Glu89 functions as the Proton acceptor in the catalytic mechanism. Residues Cys145, Cys148, Cys183, and Cys186 each contribute to the Zn(2+) site.

The protein belongs to the thymidine kinase family. As to quaternary structure, homotetramer.

It is found in the cytoplasm. The catalysed reaction is thymidine + ATP = dTMP + ADP + H(+). In Bacillus cereus (strain AH820), this protein is Thymidine kinase.